The following is a 194-amino-acid chain: Peptidyl-tRNA hydrolase (194 aa).

His17 is a binding site for tRNA. The active-site Proton acceptor is His22. TRNA is bound by residues Phe68, Asn70, and Asn116.

It belongs to the PTH family. In terms of assembly, monomer.

It localises to the cytoplasm. It catalyses the reaction an N-acyl-L-alpha-aminoacyl-tRNA + H2O = an N-acyl-L-amino acid + a tRNA + H(+). Functionally, hydrolyzes ribosome-free peptidyl-tRNAs (with 1 or more amino acids incorporated), which drop off the ribosome during protein synthesis, or as a result of ribosome stalling. In terms of biological role, catalyzes the release of premature peptidyl moieties from peptidyl-tRNA molecules trapped in stalled 50S ribosomal subunits, and thus maintains levels of free tRNAs and 50S ribosomes. The polypeptide is Peptidyl-tRNA hydrolase (Xanthomonas oryzae pv. oryzae (strain MAFF 311018)).